The primary structure comprises 90 residues: Putative cytochrome c oxidase subunit 5b-like (90 aa).

Residues cysteine 43, cysteine 67, and cysteine 70 each coordinate Zn(2+).

This sequence belongs to the cytochrome c oxidase subunit 5B (TC 3.D.4.11) family.

The chain is Putative cytochrome c oxidase subunit 5b-like from Arabidopsis thaliana (Mouse-ear cress).